We begin with the raw amino-acid sequence, 96 residues long: UPF0235 protein YpsIP31758_0827 (96 aa).

This sequence belongs to the UPF0235 family.

This Yersinia pseudotuberculosis serotype O:1b (strain IP 31758) protein is UPF0235 protein YpsIP31758_0827.